The sequence spans 171 residues: CDP-archaeol synthase (171 aa).

Helical transmembrane passes span 7–27, 54–74, 84–104, 115–135, and 141–161; these read IFWA…PVLV, GFIG…FITP, VKLA…GSFI, PAIG…AYPV, and GQII…NYFA.

The protein belongs to the CDP-archaeol synthase family. Mg(2+) is required as a cofactor.

It localises to the cell membrane. The catalysed reaction is 2,3-bis-O-(geranylgeranyl)-sn-glycerol 1-phosphate + CTP + H(+) = CDP-2,3-bis-O-(geranylgeranyl)-sn-glycerol + diphosphate. It functions in the pathway membrane lipid metabolism; glycerophospholipid metabolism. In terms of biological role, catalyzes the formation of CDP-2,3-bis-(O-geranylgeranyl)-sn-glycerol (CDP-archaeol) from 2,3-bis-(O-geranylgeranyl)-sn-glycerol 1-phosphate (DGGGP) and CTP. This reaction is the third ether-bond-formation step in the biosynthesis of archaeal membrane lipids. This Thermococcus kodakarensis (strain ATCC BAA-918 / JCM 12380 / KOD1) (Pyrococcus kodakaraensis (strain KOD1)) protein is CDP-archaeol synthase.